The primary structure comprises 359 residues: Alanine racemase (359 aa).

Residue Lys-35 is the Proton acceptor; specific for D-alanine of the active site. Lys-35 bears the N6-(pyridoxal phosphate)lysine mark. Arg-131 is a substrate binding site. Tyr-253 serves as the catalytic Proton acceptor; specific for L-alanine. Met-301 contacts substrate.

This sequence belongs to the alanine racemase family. Pyridoxal 5'-phosphate is required as a cofactor.

It catalyses the reaction L-alanine = D-alanine. It functions in the pathway amino-acid biosynthesis; D-alanine biosynthesis; D-alanine from L-alanine: step 1/1. Its function is as follows. Catalyzes the interconversion of L-alanine and D-alanine. May also act on other amino acids. This Laribacter hongkongensis (strain HLHK9) protein is Alanine racemase (alr).